Consider the following 171-residue polypeptide: Shikimate kinase (171 aa).

14–19 (GAGKST) lines the ATP pocket. Ser-18 lines the Mg(2+) pocket. Substrate contacts are provided by Asp-36, Arg-60, and Gly-82. Arg-120 contacts ATP. Substrate is bound at residue Arg-139. An ATP-binding site is contributed by Gln-156.

It belongs to the shikimate kinase family. Monomer. Mg(2+) is required as a cofactor.

The protein resides in the cytoplasm. It carries out the reaction shikimate + ATP = 3-phosphoshikimate + ADP + H(+). Its pathway is metabolic intermediate biosynthesis; chorismate biosynthesis; chorismate from D-erythrose 4-phosphate and phosphoenolpyruvate: step 5/7. Functionally, catalyzes the specific phosphorylation of the 3-hydroxyl group of shikimic acid using ATP as a cosubstrate. The chain is Shikimate kinase from Shewanella frigidimarina (strain NCIMB 400).